The chain runs to 239 residues: Ribosomal RNA small subunit methyltransferase G (239 aa).

Residues Gly77, Phe82, 128-129, and Arg147 each bind S-adenosyl-L-methionine; that span reads AE. The tract at residues 219 to 239 is disordered; that stretch reads KNTPKKYPRKPGTPNKSPIEG.

This sequence belongs to the methyltransferase superfamily. RNA methyltransferase RsmG family.

It is found in the cytoplasm. Specifically methylates the N7 position of guanine in position 535 of 16S rRNA. The polypeptide is Ribosomal RNA small subunit methyltransferase G (Bacillus subtilis (strain 168)).